Here is a 1219-residue protein sequence, read N- to C-terminus: N-acetylglucosamine-1-phosphotransferase subunits alpha/beta (1219 aa).

The chain crosses the membrane as a helical span at residues 27–47 (LCFGGLVLMIVSAFQFGEVVV). N-linked (GlcNAc...) asparagine glycosylation is found at asparagine 88, asparagine 119, asparagine 153, asparagine 292, and asparagine 381. 4 disulfide bridges follow: cysteine 443/cysteine 466, cysteine 457/cysteine 473, cysteine 508/cysteine 531, and cysteine 522/cysteine 538. 2 LNR repeats span residues 443–478 (CAEGCPGSWIKDGYCDKACNNSACDWDGGDCQGSSR) and 508–538 (CNQGCANSWLADKFCDQACNVLACGFDVGDC). Residue aspartate 454 participates in Ca(2+) binding. N-linked (GlcNAc...) asparagine glycosylation occurs at asparagine 462. Positions 469, 472, 519, 534, and 537 each coordinate Ca(2+). N-linked (GlcNAc...) asparagine glycans are attached at residues asparagine 554, asparagine 610, asparagine 617, asparagine 645, asparagine 696, asparagine 726, asparagine 823, and asparagine 974. A disordered region spans residues 640–666 (ELPKSNTSTPVRDKEEEPKPTVATPEP). Residues 696–804 (NETLLPDEVK…DDVTTKAQSR (109 aa)) enclose the DMAP1-binding domain. The region spanning 970-1005 (VQQLNISEVFDEIDTDHSGVLSDREIRTLATRIHEL) is the EF-hand domain. The Ca(2+) site is built by aspartate 983, aspartate 985, serine 987, and glutamate 994. Residues asparagine 1021, asparagine 1029, and asparagine 1094 are each glycosylated (N-linked (GlcNAc...) asparagine). Residues 1180–1200 (VLVTLVVFTVMSFFAEQLVML) form a helical membrane-spanning segment.

The protein belongs to the stealth family. As to quaternary structure, hexamer of two alpha, two beta and two gamma (GNPTG) subunits; disulfide-linked. The alpha and/or the beta subunits of the enzyme constitute the catalytic subunits. Post-translationally, the alpha- and beta-subunits are generated by a proteolytic cleavage by mbtps1 protease at the Gln-893-Asp-894 bond.

The protein resides in the golgi apparatus membrane. It catalyses the reaction N(4)-[alpha-D-mannosyl-(1-&gt;2)-alpha-D-mannosyl-(glycan)]-L-asparaginyl-[protein] + UDP-N-acetyl-alpha-D-glucosamine = N(4)-[6-(N-acetyl-alpha-D-glucosaminyl-1-phospho)-alpha-D-mannosyl-(1-&gt;2)-alpha-D-mannosyl-(glycan)]-L-asparaginyl-[protein] + UMP + H(+). Functionally, catalyzes the formation of mannose 6-phosphate (M6P) markers on high mannose type oligosaccharides in the Golgi apparatus. M6P residues are required to bind to the M6P receptors (MPR), which mediate the vesicular transport of lysosomal enzymes to the endosomal/prelysosomal compartment. The protein is N-acetylglucosamine-1-phosphotransferase subunits alpha/beta (gnptab) of Danio rerio (Zebrafish).